The chain runs to 414 residues: Imidazolonepropionase (414 aa).

Fe(3+) contacts are provided by His73 and His75. Residues His73 and His75 each contribute to the Zn(2+) site. Residues Arg82, Tyr145, and His178 each coordinate 4-imidazolone-5-propanoate. Tyr145 is a binding site for N-formimidoyl-L-glutamate. Residue His249 coordinates Fe(3+). His249 provides a ligand contact to Zn(2+). 4-imidazolone-5-propanoate is bound at residue Gln252. Asp324 lines the Fe(3+) pocket. Asp324 contributes to the Zn(2+) binding site. N-formimidoyl-L-glutamate-binding residues include Asn326 and Gly328. Residue Ser329 coordinates 4-imidazolone-5-propanoate.

Belongs to the metallo-dependent hydrolases superfamily. HutI family. It depends on Zn(2+) as a cofactor. The cofactor is Fe(3+).

It localises to the cytoplasm. The catalysed reaction is 4-imidazolone-5-propanoate + H2O = N-formimidoyl-L-glutamate. It functions in the pathway amino-acid degradation; L-histidine degradation into L-glutamate; N-formimidoyl-L-glutamate from L-histidine: step 3/3. Functionally, catalyzes the hydrolytic cleavage of the carbon-nitrogen bond in imidazolone-5-propanoate to yield N-formimidoyl-L-glutamate. It is the third step in the universal histidine degradation pathway. The protein is Imidazolonepropionase of Shewanella denitrificans (strain OS217 / ATCC BAA-1090 / DSM 15013).